The following is a 585-amino-acid chain: uncharacterized protein (585 aa).

6 helical membrane passes run 18 to 38 (FMWS…YPII), 55 to 75 (AAWV…ATFF), 128 to 148 (FFLS…AISL), 150 to 170 (VMFY…PFLA), 238 to 258 (IWSA…VALL), and 276 to 296 (VAFF…GFVI). Residues 18-301 (FMWSLLAMLL…LGFVINMFSQ (284 aa)) enclose the ABC transmembrane type-1 domain. The ABC transporter domain occupies 335 to 570 (VHFKNVSLAY…GGYYKKIYDL (236 aa)). 369-376 (GPTGSGKS) is a binding site for ATP.

This sequence belongs to the ABC transporter superfamily.

Its subcellular location is the cell membrane. This is an uncharacterized protein from Bacillus subtilis (strain 168).